The primary structure comprises 417 residues: NADH-quinone oxidoreductase subunit D (417 aa).

The protein belongs to the complex I 49 kDa subunit family. NDH-1 is composed of 14 different subunits. Subunits NuoB, C, D, E, F, and G constitute the peripheral sector of the complex.

The protein resides in the cell inner membrane. It catalyses the reaction a quinone + NADH + 5 H(+)(in) = a quinol + NAD(+) + 4 H(+)(out). In terms of biological role, NDH-1 shuttles electrons from NADH, via FMN and iron-sulfur (Fe-S) centers, to quinones in the respiratory chain. The immediate electron acceptor for the enzyme in this species is believed to be ubiquinone. Couples the redox reaction to proton translocation (for every two electrons transferred, four hydrogen ions are translocated across the cytoplasmic membrane), and thus conserves the redox energy in a proton gradient. The chain is NADH-quinone oxidoreductase subunit D from Burkholderia ambifaria (strain ATCC BAA-244 / DSM 16087 / CCUG 44356 / LMG 19182 / AMMD) (Burkholderia cepacia (strain AMMD)).